Here is a 334-residue protein sequence, read N- to C-terminus: MKIVFFGTPEFAVPTLEKLLLNQEFEVLAVVTQPDKRRERGNKLTPSPVKNMAIAHDLPVWQPERIKKDTETLNKLKQLDADAFVVVAYGQILSQKILDMPKLGCVNVHGSILPQYRGAAPIQWCLYNGETETGITTMLMDAGMDTGAMLLKATTPIGLLDNADDVAQRLSVIGGDLLIETLYKLQQQEIQPIPQDNAAATYASLIQKQDYGLDWSRSALQLHNQIRGFYPNCTTTFRNQPLKITASFPLGAAYNDELPPELQKMLQKLPDLSQISGSPGEVVSITKGVGAIAQTGEGLLLLREVQLPGKRPQSGWDFVNGTRLTVGEVLGNGS.

Residue 111–114 (SILP) coordinates (6S)-5,6,7,8-tetrahydrofolate.

It belongs to the Fmt family.

It carries out the reaction L-methionyl-tRNA(fMet) + (6R)-10-formyltetrahydrofolate = N-formyl-L-methionyl-tRNA(fMet) + (6S)-5,6,7,8-tetrahydrofolate + H(+). In terms of biological role, attaches a formyl group to the free amino group of methionyl-tRNA(fMet). The formyl group appears to play a dual role in the initiator identity of N-formylmethionyl-tRNA by promoting its recognition by IF2 and preventing the misappropriation of this tRNA by the elongation apparatus. The sequence is that of Methionyl-tRNA formyltransferase from Trichormus variabilis (strain ATCC 29413 / PCC 7937) (Anabaena variabilis).